The following is a 24-amino-acid chain: Ascaphin-6 (24 aa).

Expressed by the skin glands.

It is found in the secreted. Its function is as follows. Antimicrobial peptide that shows higher potency against Gram-negative bacteria than against Gram-positive bacteria. Has a very week hemolytic activity. The polypeptide is Ascaphin-6 (Ascaphus truei (Coastal tailed frog)).